The primary structure comprises 224 residues: 2,5-diamino-6-ribosylamino-4(3H)-pyrimidinone 5'-phosphate reductase (224 aa).

NADP(+)-binding positions include G16, T57, D61, 83–86 (SKLR), V134, and 156–159 (GGTL).

The protein belongs to the HTP reductase family. Homodimer.

The enzyme catalyses 2,5-diamino-6-(1-D-ribitylamino)pyrimidin-4(3H)-one 5'-phosphate + NADP(+) = 2,5-diamino-6-(1-D-ribosylamino)pyrimidin-4(3H)-one 5'-phosphate + NADPH + H(+). It carries out the reaction 2,5-diamino-6-(1-D-ribitylamino)pyrimidin-4(3H)-one 5'-phosphate + NAD(+) = 2,5-diamino-6-(1-D-ribosylamino)pyrimidin-4(3H)-one 5'-phosphate + NADH + H(+). Its pathway is cofactor biosynthesis; riboflavin biosynthesis. In terms of biological role, catalyzes an early step in riboflavin biosynthesis, the NAD(P)H-dependent reduction of the ribose side chain of 2,5-diamino-6-ribosylamino-4(3H)-pyrimidinone 5'-phosphate, yielding 2,5-diamino-6-ribitylamino-4(3H)-pyrimidinone 5'-phosphate. The beta anomer is the authentic substrate, and the alpha anomer can serve as substrate subsequent to spontaneous anomerization. NADPH and NADH function equally well as the reductants. Does not catalyze the reduction of 5-amino-6-(5-phospho-D-ribosylamino)uracil to 5-amino-6-(5-phospho-D-ribitylamino)uracil. The protein is 2,5-diamino-6-ribosylamino-4(3H)-pyrimidinone 5'-phosphate reductase (arfC) of Methanocaldococcus jannaschii (strain ATCC 43067 / DSM 2661 / JAL-1 / JCM 10045 / NBRC 100440) (Methanococcus jannaschii).